The sequence spans 1522 residues: DNA topoisomerase 2-binding protein 1 (1522 aa).

BRCT domains follow at residues 101–189 and 195–284; these read VYNM…RYTD and FKCP…IYKT. The residue at position 298 (Thr-298) is a Phosphothreonine. A Phosphoserine modification is found at Ser-301. 3 BRCT domains span residues 354–444, 548–633, and 641–738; these read APED…PYIH, TEEG…SNPL, and TGMT…HFLI. An interaction with CIP2A region spans residues 756–891; sequence INLNSDTAEH…AVALSASPQL (136 aa). Phosphothreonine is present on residues Thr-779 and Thr-848. Residues 852-858 carry the Nuclear localization signal motif; the sequence is PSQQKRK. The residue at position 860 (Ser-860) is a Phosphoserine. Position 861 is a phosphothreonine (Thr-861). Phosphoserine is present on residues Ser-864, Ser-886, and Ser-888. Residues 900–991 enclose the BRCT 6 domain; the sequence is EAPKPLHKVV…KHLPESLYPH (92 aa). Ser-1002 is modified (phosphoserine). Residues 1018–1058 are disordered; the sequence is VSSTKDDEPDPLILEENDVDNMATNNKESAPSNGSGKNDSK. Acidic residues predominate over residues 1024–1036; that stretch reads DEPDPLILEENDV. Residues 1039–1058 show a composition bias toward polar residues; the sequence is MATNNKESAPSNGSGKNDSK. Thr-1062 and Thr-1064 each carry phosphothreonine. Residues 1083–1114 are compositionally biased toward polar residues; sequence SIVKPQGQRTSLSRSGCNSASSTPDSTRSARS. A disordered region spans residues 1083–1118; the sequence is SIVKPQGQRTSLSRSGCNSASSTPDSTRSARSGRSR. BRCT domains are found at residues 1259 to 1351 and 1389 to 1486; these read ETHE…DYEW and IVEG…NYCL. Residues 1501 to 1522 are disordered; that stretch reads TGLSQKRKAPTEKNKIKRPRVH. The residue at position 1504 (Ser-1504) is a Phosphoserine. The short motif at 1517–1520 is the Nuclear localization signal element; that stretch reads KRPR.

This sequence belongs to the TOPBP1 family. In terms of assembly, interacts (via BRCT domains 1 and 2) with (phosphorylated) MDC1; promoting TOPBP1 recruitment to DNA damage sites during mitosis. Interacts (via BRCT domains 7 and 8) with (autophosphorylated) ATR; promoting activation of ATR. Interacts (via BRCT domains 7 and 8) with (phosphorylated) POLQ; specifically binds POLQ phosphorylated by PLK1, promoting POLQ recruitment to DNA damage sites. Interacts (via BRCT domains 1 and 2) with (phosphorylated) RAD9A. Interacts (via BRCT domain 2) with (phosphorylated) TP53BP1. Interacts (via BRCT domain 2) with (phosphorylated) HTATSF1. Interacts (via BRCT domains 7 and 8) with (phosphorylated) RAD51; promoting RAD51 recruitment to damaged chromatin. Interacts with CIP2A; forming the CIP2A-TOPBP1 complex. Interacts with POLE. Interacts with UBR5. Interacts with E2F1. Interacts with PML. Interacts with SMARCA2. Interacts with SMARCA4. Interacts with RHNO1. May interact with TOP2B. Interacts with TICRR. Interacts with HELB. Interacts (via residues 1233-1522) with RECQL4. Post-translationally, phosphorylated on serine and threonine residues in response to X-ray irradiation. In terms of processing, ubiquitinated and degraded by the proteasome. X-ray irradiation reduces ubiquitination. Deubiquitinated by USP13; leading to TOPBP1 stabilizion and activation of the ATR-TOPBP1 axis pathway. As to expression, highly expressed in heart, brain, placenta, lung and kidney.

The protein localises to the nucleus. It localises to the chromosome. It is found in the cytoplasm. The protein resides in the cytoskeleton. Its subcellular location is the microtubule organizing center. The protein localises to the centrosome. It localises to the spindle pole. Scaffold protein that acts as a key protein-protein adapter in DNA replication and DNA repair. Composed of multiple BRCT domains, which specifically recognize and bind phosphorylated proteins, bringing proteins together into functional combinations. Required for DNA replication initiation but not for the formation of pre-replicative complexes or the elongation stages. Necessary for the loading of replication factors onto chromatin, including GMNC, CDC45, DNA polymerases and components of the GINS complex. Plays a central role in DNA repair by bridging proteins and promoting recruitment of proteins to DNA damage sites. Involved in double-strand break (DSB) repair via homologous recombination in S-phase by promoting the exchange between the DNA replication factor A (RPA) complex and RAD51. Mechanistically, TOPBP1 is recruited to DNA damage sites in S-phase via interaction with phosphorylated HTATSF1, and promotes the loading of RAD51, thereby facilitating RAD51 nucleofilaments formation and RPA displacement, followed by homologous recombination. Involved in microhomology-mediated end-joining (MMEJ) DNA repair by promoting recruitment of polymerase theta (POLQ) to DNA damage sites during mitosis. MMEJ is an alternative non-homologous end-joining (NHEJ) machinery that takes place during mitosis to repair DSBs in DNA that originate in S-phase. Recognizes and binds POLQ phosphorylated by PLK1, enabling its recruitment to DSBs for subsequent repair. Involved in G1 DNA damage checkpoint by acting as a molecular adapter that couples TP53BP1 and the 9-1-1 complex. In response to DNA damage, triggers the recruitment of checkpoint signaling proteins on chromatin, which activate the CHEK1 signaling pathway and block S-phase progression. Acts as an activator of the kinase activity of ATR. Also required for chromosomal stability when DSBs occur during mitosis by forming filamentous assemblies that bridge MDC1 and tether broken chromosomes during mitosis. Together with CIP2A, plays an essential role in the response to genome instability generated by the presence of acentric chromosome fragments derived from shattered chromosomes within micronuclei. Micronuclei, which are frequently found in cancer cells, consist of chromatin surrounded by their own nuclear membrane: following breakdown of the micronuclear envelope, a process associated with chromothripsis, the CIP2A-TOPBP1 complex tethers chromosome fragments during mitosis to ensure clustered segregation of the fragments to a single daughter cell nucleus, facilitating re-ligation with limited chromosome scattering and loss. Recruits the SWI/SNF chromatin remodeling complex to E2F1-responsive promoters, thereby down-regulating E2F1 activity and inhibiting E2F1-dependent apoptosis during G1/S transition and after DNA damage. The chain is DNA topoisomerase 2-binding protein 1 from Homo sapiens (Human).